Here is a 658-residue protein sequence, read N- to C-terminus: NUAK family SNF1-like kinase 1 (658 aa).

Methionine 1 is subject to N-acetylmethionine. The disordered stretch occupies residues 1 to 53 (MEGAAVSAAGDGPAVETGLPGSPLEAVAGATAAPVEPRKPHGVKRHHHKHNLK). Serine 22 carries the post-translational modification Phosphoserine. Positions 40 to 53 (PHGVKRHHHKHNLK) are enriched in basic residues. The 252-residue stretch at 56–307 (YELQETLGKG…IEDIANHWWV (252 aa)) folds into the Protein kinase domain. ATP is bound by residues 62–70 (LGKGTYGKV) and lysine 85. Aspartate 179 acts as the Proton acceptor in catalysis. Threonine 212 carries the phosphothreonine; by LKB1 modification. 2 disordered regions span residues 353-422 (LAKP…EGIV) and 441-568 (IPLP…SYSR). Residues 378–393 (FPQSGQDSVPESPSKL) are compositionally biased toward polar residues. Positions 394–405 (SSKRPKGILKKR) are enriched in basic residues. The GILK motif signature appears at 400-403 (GILK). Serine 456 is subject to Phosphoserine. Residues 519 to 530 (SCRRKGILKHSS) show a composition bias toward basic residues. A compositionally biased stretch (low complexity) spans 559–568 (SDGISRSYSR). Serine 601 bears the Phosphoserine; by PKB/AKT1 mark.

The protein belongs to the protein kinase superfamily. CAMK Ser/Thr protein kinase family. SNF1 subfamily. As to quaternary structure, interacts (via GILK motif) with PPP1CB; the interaction is direct and bridges NUAK1 and PPP1R12A. Interacts with CDKN1A. Mg(2+) is required as a cofactor. Phosphorylated at Thr-212 by STK11/LKB1 in complex with STE20-related adapter-alpha (STRADA) pseudo kinase and CAB39. Not dephosphorylated by the myosin PP1 complex when regulating its activity, due to the presence of PPP1R12A, which prevents myosin PP1 from dephosphorylating NUAK1. Phosphorylated by STK38L upon stimulation with IGF1. In terms of processing, ubiquitinated with 'Lys-29'- and 'Lys-33'-linked polyubiquitins which appear to impede LKB1-mediated phosphorylation. Deubiquitinated by USP9X. Expressed in the developing central nervous system, in epidermis, and some other tissues.

It localises to the nucleus. It is found in the cytoplasm. The catalysed reaction is L-seryl-[protein] + ATP = O-phospho-L-seryl-[protein] + ADP + H(+). It carries out the reaction L-threonyl-[protein] + ATP = O-phospho-L-threonyl-[protein] + ADP + H(+). With respect to regulation, activated by phosphorylation on Thr-212. Activated by phosphorylation at Ser-601 AKT1 during glucose starvation; the relevance of such activation in normal cells is however unsure. Serine/threonine-protein kinase involved in various processes such as cell adhesion, regulation of cell ploidy and senescence, cell proliferation and tumor progression. Phosphorylates ATM, CASP6, LATS1, PPP1R12A and p53/TP53. Acts as a regulator of cellular senescence and cellular ploidy by mediating phosphorylation of 'Ser-464' of LATS1, thereby controlling its stability. Controls cell adhesion by regulating activity of the myosin protein phosphatase 1 (PP1) complex. Acts by mediating phosphorylation of PPP1R12A subunit of myosin PP1: phosphorylated PPP1R12A then interacts with 14-3-3, leading to reduced dephosphorylation of myosin MLC2 by myosin PP1. May be involved in DNA damage response: phosphorylates p53/TP53 at 'Ser-15' and 'Ser-392' and is recruited to the CDKN1A/WAF1 promoter to participate in transcription activation by p53/TP53. May also act as a tumor malignancy-associated factor by promoting tumor invasion and metastasis under regulation and phosphorylation by AKT1. Suppresses Fas-induced apoptosis by mediating phosphorylation of CASP6, thereby suppressing the activation of the caspase and the subsequent cleavage of CFLAR. Regulates UV radiation-induced DNA damage response mediated by CDKN1A. In association with STK11, phosphorylates CDKN1A in response to UV radiation and contributes to its degradation which is necessary for optimal DNA repair. The polypeptide is NUAK family SNF1-like kinase 1 (Nuak1) (Mus musculus (Mouse)).